A 315-amino-acid polypeptide reads, in one-letter code: Periplasmic [NiFeSe] hydrogenase small subunit (315 aa).

A signal peptide (tat-type signal) is located at residues 1–32; the sequence is MSLSRREFVKLCSAGVAGLGISQIYHPGIVHA. [4Fe-4S] cluster contacts are provided by Cys-50, Cys-53, Cys-158, Cys-196, His-240, Cys-243, Cys-263, Cys-269, Cys-278, Cys-290, Cys-296, and Cys-299.

This sequence belongs to the [NiFe]/[NiFeSe] hydrogenase small subunit family. In terms of assembly, heterodimer of a large and a small subunit. The cofactor is [4Fe-4S] cluster. Predicted to be exported by the Tat system. The position of the signal peptide cleavage has been experimentally proven.

Its subcellular location is the periplasm. The enzyme catalyses H2 + A = AH2. The sequence is that of Periplasmic [NiFeSe] hydrogenase small subunit from Desulfomicrobium baculatum (Desulfovibrio baculatus).